The primary structure comprises 320 residues: MIKKIGVLTSGGDAPGMNAAIRGVVRAALTEGLEVMGIYDGYLGLYEDRMVQLDRYSVSDMINRGGTFLGSARFPEFRDENIRAVAIENLKKRGIDALVVIGGDGSYMGAKRLTEMGFPCIGLPGTIDNDIKGTDYTIGYFTALGTVVEAIDRLRDTSSSHQRISIVEVMGRYCGDLTLAAAIAGGCEFIVVPEVEFNREDLVAEIKAGIAKGKKHAIVAITEHMCDVDELAHFIEKETGRETRATVLGHIQRGGSPVPYDRILASRMGAYAIDLLLEGHGGRCVGIQNEQLVHHDIIDAIENMKRPFKSDWMECAKKLY.

Residue Gly12 participates in ATP binding. Residues 22-26 and 55-60 contribute to the ADP site; these read RGVVR and RYSVSD. Residues 73 to 74 and 103 to 106 contribute to the ATP site; these read RF and GDGS. Residue Asp104 coordinates Mg(2+). Residue 126 to 128 participates in substrate binding; sequence TID. The active-site Proton acceptor is the Asp128. Arg155 is a binding site for ADP. Substrate contacts are provided by residues Arg163 and 170 to 172; that span reads MGR. ADP-binding positions include 186-188, Lys212, and 214-216; these read GCE and KKH. Substrate contacts are provided by residues Glu223, Arg244, and 250–253; that span reads HIQR.

This sequence belongs to the phosphofructokinase type A (PFKA) family. ATP-dependent PFK group I subfamily. Prokaryotic clade 'B1' sub-subfamily. Homotetramer. Mg(2+) is required as a cofactor.

The protein resides in the cytoplasm. It catalyses the reaction beta-D-fructose 6-phosphate + ATP = beta-D-fructose 1,6-bisphosphate + ADP + H(+). The protein operates within carbohydrate degradation; glycolysis; D-glyceraldehyde 3-phosphate and glycerone phosphate from D-glucose: step 3/4. With respect to regulation, allosterically activated by ADP and other diphosphonucleosides, and allosterically inhibited by phosphoenolpyruvate. Its function is as follows. Catalyzes the phosphorylation of D-fructose 6-phosphate to fructose 1,6-bisphosphate by ATP, the first committing step of glycolysis. In Salmonella agona (strain SL483), this protein is ATP-dependent 6-phosphofructokinase.